The sequence spans 244 residues: Mitochondrial inner membrane protease atp23 (244 aa).

Residues 1–22 (MASTDDNKPPTASDFAKDAEPQ) form a disordered region. H144 is an a divalent metal cation binding site. E145 is a catalytic residue. H148 lines the a divalent metal cation pocket.

It belongs to the peptidase M76 family.

The protein resides in the mitochondrion inner membrane. Has a dual role in the assembly of mitochondrial ATPase. Acts as a protease that removes N-terminal residues of mitochondrial ATPase CF(0) subunit 6 at the intermembrane space side. Also involved in the correct assembly of the membrane-embedded ATPase CF(0) particle, probably mediating association of subunit 6 with the subunit 9 ring. The sequence is that of Mitochondrial inner membrane protease atp23 (atp23) from Sclerotinia sclerotiorum (strain ATCC 18683 / 1980 / Ss-1) (White mold).